The sequence spans 953 residues: Glutamate receptor 3.5 (953 aa).

A signal peptide spans 1–29 (MGFFVMIRDVSMGFMLLCISALWVLPIQG). Residues 30 to 606 (AGRESFSRNS…SPWSFLKPFT (577 aa)) are Extracellular-facing. N-linked (GlcNAc...) asparagine glycosylation is found at N38, N95, N223, N371, N397, N436, N454, and N569. The chain crosses the membrane as a helical span at residues 607–627 (IEMWAVTGALFLFVGAVIWIL). The Cytoplasmic portion of the chain corresponds to 628–636 (EHRFNEEFR). The chain crosses the membrane as a helical span at residues 637–657 (GPPRRQIITVFWFSFSTMFFS). At 658–668 (HRENTVSTLGR) the chain is on the cytoplasmic side. Residues 669-689 (FVLLVWLFVVLIINSSYTASL) traverse the membrane as a helical segment. Over 690–850 (TSILTVQQLT…TENYQISVQS (161 aa)) the chain is Extracellular. A helical transmembrane segment spans residues 851-871 (FWGLFLICGVVWFIALTLFCW). Topologically, residues 872 to 953 (KVFWQYQRLR…SQSKDHETPQ (82 aa)) are cytoplasmic. Positions 928-953 (EKSSKKLKDGQSSAENSQSKDHETPQ) are disordered.

Belongs to the glutamate-gated ion channel (TC 1.A.10.1) family. May form heteromers. Expressed predominantly in roots. Also detected in shoots.

The protein localises to the membrane. Its function is as follows. Glutamate-gated receptor that probably acts as a non-selective cation channel. May be involved in light-signal transduction and calcium homeostasis via the regulation of calcium influx into cells. The polypeptide is Glutamate receptor 3.5 (GLR3.5) (Arabidopsis thaliana (Mouse-ear cress)).